The chain runs to 224 residues: dTTP/UTP pyrophosphatase (224 aa).

The active-site Proton acceptor is the Asp-77.

The protein belongs to the Maf family. YhdE subfamily. Requires a divalent metal cation as cofactor.

It localises to the cytoplasm. The enzyme catalyses dTTP + H2O = dTMP + diphosphate + H(+). It carries out the reaction UTP + H2O = UMP + diphosphate + H(+). In terms of biological role, nucleoside triphosphate pyrophosphatase that hydrolyzes dTTP and UTP. May have a dual role in cell division arrest and in preventing the incorporation of modified nucleotides into cellular nucleic acids. The protein is dTTP/UTP pyrophosphatase of Dehalococcoides mccartyi (strain ATCC BAA-2100 / JCM 16839 / KCTC 5957 / BAV1).